Consider the following 167-residue polypeptide: Ribosome maturation factor RimM (167 aa).

The 73-residue stretch at 94 to 166 folds into the PRC barrel domain; sequence QNRAWLHELE…YIVVPRFDEF (73 aa).

This sequence belongs to the RimM family. Binds ribosomal protein uS19.

Its subcellular location is the cytoplasm. Functionally, an accessory protein needed during the final step in the assembly of 30S ribosomal subunit, possibly for assembly of the head region. Essential for efficient processing of 16S rRNA. May be needed both before and after RbfA during the maturation of 16S rRNA. It has affinity for free ribosomal 30S subunits but not for 70S ribosomes. This Chlorobium phaeovibrioides (strain DSM 265 / 1930) (Prosthecochloris vibrioformis (strain DSM 265)) protein is Ribosome maturation factor RimM.